A 118-amino-acid chain; its full sequence is Immunoglobulin lambda variable 2-8 (118 aa).

Residues 1 to 19 (MAWALLLLTLLTQGTGSWA) form the signal peptide. At Q20 the chain carries Pyrrolidone carboxylic acid. The segment at 20-44 (QSALTQPPSASGSPGQSVTISCTGT) is framework-1. The Ig-like domain occupies 20–118 (QSALTQPPSA…CSSYAGSNNF (99 aa)). Cysteines 41 and 109 form a disulfide. The segment at 45–53 (SSDVGGYNY) is complementarity-determining-1. The tract at residues 54-70 (VSWYQQHPGKAPKLMIY) is framework-2. Residues 71–73 (EVS) are complementarity-determining-2. A framework-3 region spans residues 74–109 (KRPSGVPDRFSGSKSGNTASLTVSGLQAEDEADYYC). Residues 76-97 (PSGVPDRFSGSKSGNTASLTVS) are disordered. Positions 85-97 (GSKSGNTASLTVS) are enriched in polar residues. The tract at residues 110 to 118 (SSYAGSNNF) is complementarity-determining-3.

In terms of assembly, immunoglobulins are composed of two identical heavy chains and two identical light chains; disulfide-linked.

The protein localises to the secreted. It is found in the cell membrane. V region of the variable domain of immunoglobulin light chains that participates in the antigen recognition. Immunoglobulins, also known as antibodies, are membrane-bound or secreted glycoproteins produced by B lymphocytes. In the recognition phase of humoral immunity, the membrane-bound immunoglobulins serve as receptors which, upon binding of a specific antigen, trigger the clonal expansion and differentiation of B lymphocytes into immunoglobulins-secreting plasma cells. Secreted immunoglobulins mediate the effector phase of humoral immunity, which results in the elimination of bound antigens. The antigen binding site is formed by the variable domain of one heavy chain, together with that of its associated light chain. Thus, each immunoglobulin has two antigen binding sites with remarkable affinity for a particular antigen. The variable domains are assembled by a process called V-(D)-J rearrangement and can then be subjected to somatic hypermutations which, after exposure to antigen and selection, allow affinity maturation for a particular antigen. The protein is Immunoglobulin lambda variable 2-8 of Homo sapiens (Human).